The primary structure comprises 572 residues: E3 ubiquitin-protein ligase ZFP91 (572 aa).

The segment covering 1–12 (MPGETEEPRSPE) has biased composition (basic and acidic residues). The interval 1–308 (MPGETEEPRS…PRLPKRRKKP (308 aa)) is disordered. Over residues 61-70 (AAAAAAAAAA) the composition is skewed to low complexity. Over residues 72–85 (SRRRKAEYPRRRRS) the composition is skewed to basic residues. Residues serine 86 and serine 106 each carry the phosphoserine modification. A compositionally biased stretch (basic and acidic residues) spans 122–131 (LTTDKDPKEE). The segment covering 143–162 (SITTTRASRSWRSSSRTSIS) has biased composition (low complexity). Residues 209 to 225 (SDEEEEEEEEMLISEEE) are compositionally biased toward acidic residues. 2 stretches are compositionally biased toward basic and acidic residues: residues 226 to 247 (IPFKDDPRDETYKPHLERETPK) and 254 to 271 (KVKEEKEKKEIKVEVEVE). Acidic residues predominate over residues 272–284 (VKEEENEIREDEE). 5 C2H2-type zinc fingers span residues 313–338 (VRCEMEGCGTVLAHPRYLQHHIKYQH), 344–368 (YVCPHPSCGRLFRLQKQLLRHAKHH), 374–396 (YICEYCARAFKSSHNLAVHRMIH), 402–424 (LQCEICGFTCRQKASLNWHMKKH), and 432–455 (FSCNICGKKFEKKDSVVAHKAKSH). An interaction with MAP3K14/NIK region spans residues 340 to 370 (LKKKYVCPHPSCGRLFRLQKQLLRHAKHHTD).

Belongs to the krueppel C2H2-type zinc-finger protein family. Interacts with MAP3K14/NIK. Found in all the examined tissues including brain, heart, kidney, lung, liver, spleen, thymus, skeletal muscle, ovary and testis.

The protein localises to the nucleus. The enzyme catalyses S-ubiquitinyl-[E2 ubiquitin-conjugating enzyme]-L-cysteine + [acceptor protein]-L-lysine = [E2 ubiquitin-conjugating enzyme]-L-cysteine + N(6)-ubiquitinyl-[acceptor protein]-L-lysine.. The protein operates within protein modification; protein ubiquitination. In terms of biological role, atypical E3 ubiquitin-protein ligase that mediates 'Lys-63'-linked ubiquitination of MAP3K14/NIK, leading to stabilize and activate MAP3K14/NIK. It thereby acts as an activator of the non-canonical NF-kappa-B2/NFKB2 pathway. May also play an important role in cell proliferation and/or anti-apoptosis. The protein is E3 ubiquitin-protein ligase ZFP91 (Zfp91) of Mus musculus (Mouse).